The following is a 421-amino-acid chain: Accessory Sec system protein translocase subunit SecY2 (421 aa).

The next 10 membrane-spanning stretches (helical) occupy residues 17–37 (LWTSLIVFIFLIGRNILIPGV), 69–89 (FALGLGPWMSATILWRVLTLI), 102–122 (TFLFKIAIAIIIGFIQSIAII), 139–159 (FGAMATISLIMVSGAVFLVWL), 165–185 (ILGIGGPTVLILASMIINWPT), 204–224 (VILMLVIMISIVFLVLLTVVV), 254–274 (PAGGMPLMYSMTLLVLPQYIL), 299–319 (PLGVTAYIIILFALSIGFAFI), 358–378 (SFVGALYMSLIAGFPLYFGII), and 383–403 (TQYALTAGSIIILVNLVINII).

This sequence belongs to the SecY/SEC61-alpha family. SecY2 subfamily. Component of the accessory SecA2/SecY2 protein translocase complex required to export cell wall proteins. May form heterotrimers with SecE and SecG subunits.

Its subcellular location is the cell membrane. In terms of biological role, part of the accessory SecA2/SecY2 system specifically required for export of possible cell wall proteins. The central subunit of a protein translocation channel. The polypeptide is Accessory Sec system protein translocase subunit SecY2 (Leuconostoc gelidum subsp. gasicomitatum (strain DSM 15947 / CCUG 46042 / CECT 5767 / JCM 12535 / LMG 18811 / NBRC 113245 / TB1-10) (Leuconostoc gasicomitatum)).